The primary structure comprises 323 residues: Acetyl-coenzyme A carboxylase carboxyl transferase subunit alpha (323 aa).

A CoA carboxyltransferase C-terminal domain is found at 39-293 (RLAGKSQQLT…KRSLAESLRQ (255 aa)).

The protein belongs to the AccA family. As to quaternary structure, acetyl-CoA carboxylase is a heterohexamer composed of biotin carboxyl carrier protein (AccB), biotin carboxylase (AccC) and two subunits each of ACCase subunit alpha (AccA) and ACCase subunit beta (AccD).

The protein resides in the cytoplasm. The catalysed reaction is N(6)-carboxybiotinyl-L-lysyl-[protein] + acetyl-CoA = N(6)-biotinyl-L-lysyl-[protein] + malonyl-CoA. The protein operates within lipid metabolism; malonyl-CoA biosynthesis; malonyl-CoA from acetyl-CoA: step 1/1. Its function is as follows. Component of the acetyl coenzyme A carboxylase (ACC) complex. First, biotin carboxylase catalyzes the carboxylation of biotin on its carrier protein (BCCP) and then the CO(2) group is transferred by the carboxyltransferase to acetyl-CoA to form malonyl-CoA. In Cupriavidus necator (strain ATCC 17699 / DSM 428 / KCTC 22496 / NCIMB 10442 / H16 / Stanier 337) (Ralstonia eutropha), this protein is Acetyl-coenzyme A carboxylase carboxyl transferase subunit alpha.